The primary structure comprises 464 residues: Argininosuccinate lyase (464 aa).

It belongs to the lyase 1 family. Argininosuccinate lyase subfamily.

Its subcellular location is the cytoplasm. It catalyses the reaction 2-(N(omega)-L-arginino)succinate = fumarate + L-arginine. The protein operates within amino-acid biosynthesis; L-arginine biosynthesis; L-arginine from L-ornithine and carbamoyl phosphate: step 3/3. This chain is Argininosuccinate lyase, found in Herminiimonas arsenicoxydans.